The primary structure comprises 495 residues: Fibronectin type III and SPRY domain-containing protein 1 (495 aa).

The stretch at 4–99 (QKESLRKIIT…ALESSEELLE (96 aa)) forms a coiled coil. The COS domain occupies 105–162 (LCSSENDSFTQAAKDIKDSVTMAPAFRLSLKAKASDSMNHMMVDFTHERNLLQSITFL). Residues 164 to 268 (VPATPEIHVA…EPVTLETHAF (105 aa)) form the Fibronectin type-III domain. The 196-residue stretch at 281 to 476 (LKVEDLSVEW…VQTGLQVPSI (196 aa)) folds into the B30.2/SPRY domain. A disordered region spans residues 306–332 (KNRTNSPMHSPARTAMMSPKRAPSARV). At Ser-490 the chain carries Phosphoserine.

In terms of assembly, oligomerization is required for binding to microtubules.

The protein resides in the cytoplasm. It is found in the cytoskeleton. Its subcellular location is the microtubule organizing center. It localises to the centrosome. The protein localises to the nucleus. The protein resides in the cleavage furrow. Its function is as follows. May be involved in microtubule organization and stabilization. The protein is Fibronectin type III and SPRY domain-containing protein 1 (fsd1) of Danio rerio (Zebrafish).